We begin with the raw amino-acid sequence, 194 residues long: Fibroblast growth factor 7 (194 aa).

A signal peptide spans 1-31 (MRKWILTWILPTLLYRSCFHIICLVGTISLA). Asn45 is a glycosylation site (N-linked (GlcNAc...) asparagine).

This sequence belongs to the heparin-binding growth factors family. In terms of assembly, interacts with FGFBP1. Interacts with FGFR2. Affinity between fibroblast growth factors (FGFs) and their receptors is increased by heparan sulfate glycosaminoglycans that function as coreceptors.

The protein resides in the secreted. Its function is as follows. Plays an important role in the regulation of embryonic development, cell proliferation and cell differentiation. Required for normal branching morphogenesis. Growth factor active on keratinocytes. Possible major paracrine effector of normal epithelial cell proliferation. The polypeptide is Fibroblast growth factor 7 (FGF7) (Canis lupus familiaris (Dog)).